The following is a 132-amino-acid chain: Baseplate wedge protein gp25 (132 aa).

Belongs to the GpW/Gp25 family. Homodimer. Interacts with gp53 and with the (gp6)2-gp7 heterotrimeric molecule; The gp25-(gp6)2-gp7 module is involved in sheath contraction. Part of the baseplate macromolecular complex which consists of gp5, gp5.4, gp27 (central spike complex); gp6, gp25, gp53 (inner baseplate); gp7, gp8 (intermediate baseplate); gp9, gp10, gp11, gp12 (peripheral); gp48 and gp54 (proximal region of the tail tube).

It is found in the virion. Its function is as follows. Baseplate protein that is located next to the tail tube (inner baseplate). Involved in sheath assembly. The gp25-(gp6)2-gp7 module is involved in sheath contraction. This Enterobacteria phage T4 (Bacteriophage T4) protein is Baseplate wedge protein gp25 (25).